We begin with the raw amino-acid sequence, 53 residues long: UPF0391 membrane protein BP1737 (53 aa).

2 helical membrane-spanning segments follow: residues 5 to 25 and 30 to 50; these read AVVF…GIAA and IAKI…LGGV.

Belongs to the UPF0391 family.

It localises to the cell membrane. The protein is UPF0391 membrane protein BP1737 of Bordetella pertussis (strain Tohama I / ATCC BAA-589 / NCTC 13251).